The chain runs to 79 residues: ATP synthase subunit c (79 aa).

Helical transmembrane passes span 11-31 (ISAA…IGIL) and 55-75 (IVMG…LYLI).

It belongs to the ATPase C chain family. F-type ATPases have 2 components, F(1) - the catalytic core - and F(0) - the membrane proton channel. F(1) has five subunits: alpha(3), beta(3), gamma(1), delta(1), epsilon(1). F(0) has three main subunits: a(1), b(2) and c(10-14). The alpha and beta chains form an alternating ring which encloses part of the gamma chain. F(1) is attached to F(0) by a central stalk formed by the gamma and epsilon chains, while a peripheral stalk is formed by the delta and b chains.

It localises to the cell membrane. Functionally, f(1)F(0) ATP synthase produces ATP from ADP in the presence of a proton or sodium gradient. F-type ATPases consist of two structural domains, F(1) containing the extramembraneous catalytic core and F(0) containing the membrane proton channel, linked together by a central stalk and a peripheral stalk. During catalysis, ATP synthesis in the catalytic domain of F(1) is coupled via a rotary mechanism of the central stalk subunits to proton translocation. Its function is as follows. Key component of the F(0) channel; it plays a direct role in translocation across the membrane. A homomeric c-ring of between 10-14 subunits forms the central stalk rotor element with the F(1) delta and epsilon subunits. The chain is ATP synthase subunit c from Wigglesworthia glossinidia brevipalpis.